A 163-amino-acid polypeptide reads, in one-letter code: Campylobacter invasion antigen D (163 aa).

The MKD signature appears at 135-145 (KKDDLENRLNL).

As to quaternary structure, interacts with the host cell protein IQGAP1, thus displacing RACGAP1 from the IQGAP1 complex.

It is found in the secreted. The protein localises to the host cytoplasm. The protein resides in the host cytosol. Effector protein required for the development of acute disease and colon inflammatory lesions. Required for maximal host cell invasion and maximal secretion of the inflammatory chemokine interleukin-8 (IL-8) from host cells. Acts by activating the host MAP kinase signaling pathways ERK-1/2 and p38 to promote both cellular invasion and the release of IL-8. CiaD mediated activation of ERK-1/2 leads to the phosphorylation of host cortactin (CTTN) on serine residues and association of cortactin with N-WASP, promoting actin cytoskeleton rearrangement, membrane ruffling and host cell invasion. In addition, maximal host cell invasion requires interaction with the host cell protein IQGAP1, a Ras GTPase-activating-like protein. Binding to IQGAP1 facilitates the activation of the Rho GTPases RAC1 and CDC42, further promoting actin reorganization and bacterial uptake. CiaD promotes RAC1 activation by excluding RACGAP1 from the IQGAP1 complex, preventing the deactivation of RAC1. CiaD probably activates ERK signaling upstream or independently of IQGAP1. The chain is Campylobacter invasion antigen D from Campylobacter jejuni subsp. jejuni serotype O:2 (strain ATCC 700819 / NCTC 11168).